Reading from the N-terminus, the 307-residue chain is Coproporphyrin III ferrochelatase (307 aa).

Fe-coproporphyrin III-binding positions include Tyr-12, Arg-29, 45–46, Ser-53, and Tyr-124; that span reads RY. Residues His-181 and Glu-263 each contribute to the Fe(2+) site.

It belongs to the ferrochelatase family.

The protein localises to the cytoplasm. It carries out the reaction Fe-coproporphyrin III + 2 H(+) = coproporphyrin III + Fe(2+). It participates in porphyrin-containing compound metabolism; protoheme biosynthesis. Its function is as follows. Involved in coproporphyrin-dependent heme b biosynthesis. Catalyzes the insertion of ferrous iron into coproporphyrin III to form Fe-coproporphyrin III. This chain is Coproporphyrin III ferrochelatase, found in Staphylococcus epidermidis (strain ATCC 12228 / FDA PCI 1200).